Reading from the N-terminus, the 145-residue chain is Transcriptional regulator MraZ (145 aa).

2 consecutive SpoVT-AbrB domains span residues 5 to 50 and 81 to 124; these read TFNH…ALPQ and AHEV…DRAA.

The protein belongs to the MraZ family. In terms of assembly, forms oligomers.

It localises to the cytoplasm. Its subcellular location is the nucleoid. The protein is Transcriptional regulator MraZ of Anaeromyxobacter dehalogenans (strain 2CP-1 / ATCC BAA-258).